The sequence spans 573 residues: Glutathione/L-cysteine transport system ATP-binding/permease protein CydC (573 aa).

At 1–15 the chain is on the cytoplasmic side; the sequence is MRALLPYLALYKRHK. 2 helical membrane passes run 16–36 and 37–57; these read WMLSLGIVLAIVTLLASIGLL and TLSGWFLSASAVAGVAGLYSF. Residues 20–306 form the ABC transmembrane type-1 domain; sequence LGIVLAIVTL…VTGAFQHLGQ (287 aa). Residues 58–136 lie on the Cytoplasmic side of the membrane; it reads NYMLPAAGVR…VDTLDHLYLR (79 aa). The helical transmembrane segment at 137–157 threads the bilayer; sequence VISPLVGAFVVIMVVTIGLSF. Residues 158-161 lie on the Periplasmic side of the membrane; that stretch reads LDFT. The helical transmembrane segment at 162–182 threads the bilayer; sequence LAFTLGGIMLLTLFLMPPLFY. Residues 183-249 lie on the Cytoplasmic side of the membrane; sequence RAGKSTGQNL…QSELTALSQA (67 aa). Residues 250–270 traverse the membrane as a helical segment; sequence IMLLIGALAVILMLWMASGGV. The Periplasmic segment spans residues 271–276; sequence GGNAQP. A helical transmembrane segment spans residues 277 to 297; it reads GALIALFVFCALAAFEALAPV. Topologically, residues 298-573 are cytoplasmic; it reads TGAFQHLGQV…GRYYQFKQGL (276 aa). In terms of domain architecture, ABC transporter spans 339–572; it reads LTLRDVQFTY…QGRYYQFKQG (234 aa). Residue 373 to 380 participates in ATP binding; that stretch reads GRTGCGKS.

The protein belongs to the ABC transporter superfamily. Cysteine exporter (TC 3.A.1.129.1) family. Forms a heterodimer with CydD.

It is found in the cell inner membrane. The enzyme catalyses L-cysteine(in) + ATP + H2O = L-cysteine(out) + ADP + phosphate + H(+). It catalyses the reaction glutathione(in) + ATP + H2O = glutathione(out) + ADP + phosphate + H(+). Its activity is regulated as follows. ATPase activity is stimulated by various thiol compounds. The presence of heme leads to a further enhancement of thiol-stimulated ATPase activity, although a large excess of heme inhibits activity. Glutathione transport is inhibited by sodium orthovanadate, an inhibitor of ABC-type transport systems, but not by the proton ionophore carbonyl cyanide m-chlorophenylhydrazone (CCCP). Its function is as follows. Part of the ABC transporter complex CydDC that exports the reduced low-molecular-weight thiols cysteine and glutathione to the periplasm. Export of these thiol-containing redox-active molecules may be crucial for redox homeostasis in the periplasm, permitting correct assembly of various respiratory complexes and formation of correct disulfide bonds in periplasmic and secreted proteins. CydC contains transmembrane domains (TMD), which form a pore in the inner membrane, and an ATP-binding domain (NBD), which is responsible for energy generation. Required for the assembly of functional cytochrome bd-type quinol oxidases and periplasmic c-type cytochromes. Overexpression of CydDC under anaerobic conditions also results in the formation of a heme biosynthesis-derived pigment, P-574. CydDC binds heme b, but heme is probably not transported by the complex and instead has a role in regulating ATPase activity. Functionally, conversely, a more recent study suggests an alternative function of CydDC: authors suggest that CydDC does not mediate the export of L-cysteine but rather reduces cytoplasmic L-cystine to L-cysteine. The principle function of CydDC would be to maintain the reduced state of cytoplasmic L-cysteine, thereby providing an important connection between sulfur metabolism, oxidative stress and resistance to antibiotics. The polypeptide is Glutathione/L-cysteine transport system ATP-binding/permease protein CydC (Escherichia coli (strain K12)).